We begin with the raw amino-acid sequence, 132 residues long: ER membrane protein complex subunit 5 (132 aa).

The Cytoplasmic portion of the chain corresponds to 1–3 (MAS). The helical transmembrane segment at 4-22 (SIWKGLVGIGLFALAHAAF) threads the bilayer. At 23-43 (SAAQHRSYMRLTEKEDETLPI) the chain is on the lumenal side. Residues 44-63 (DIVLQTLLAFIVACYGIVHI) form a helical membrane-spanning segment. The Cytoplasmic segment spans residues 64–132 (AGEFKDMDAT…KLSKLESMHR (69 aa)).

It belongs to the membrane magnesium transporter (TC 1.A.67) family. Component of the ER membrane protein complex (EMC).

The protein resides in the endoplasmic reticulum membrane. Its subcellular location is the golgi apparatus membrane. It is found in the early endosome membrane. Functionally, part of the endoplasmic reticulum membrane protein complex (EMC) that enables the energy-independent insertion into endoplasmic reticulum membranes of newly synthesized membrane proteins. Preferentially accommodates proteins with transmembrane domains that are weakly hydrophobic or contain destabilizing features such as charged and aromatic residues. Involved in the cotranslational insertion of multi-pass membrane proteins in which stop-transfer membrane-anchor sequences become ER membrane spanning helices. It is also required for the post-translational insertion of tail-anchored/TA proteins in endoplasmic reticulum membranes. By mediating the proper cotranslational insertion of N-terminal transmembrane domains in an N-exo topology, with translocated N-terminus in the lumen of the ER, controls the topology of multi-pass membrane proteins like the G protein-coupled receptors. By regulating the insertion of various proteins in membranes, it is indirectly involved in many cellular processes. May be involved in Mg(2+) transport. The polypeptide is ER membrane protein complex subunit 5 (Xenopus tropicalis (Western clawed frog)).